The following is a 339-amino-acid chain: UDP-3-O-acylglucosamine N-acyltransferase (339 aa).

Histidine 238 serves as the catalytic Proton acceptor.

It belongs to the transferase hexapeptide repeat family. LpxD subfamily. As to quaternary structure, homotrimer.

The catalysed reaction is a UDP-3-O-[(3R)-3-hydroxyacyl]-alpha-D-glucosamine + a (3R)-hydroxyacyl-[ACP] = a UDP-2-N,3-O-bis[(3R)-3-hydroxyacyl]-alpha-D-glucosamine + holo-[ACP] + H(+). It functions in the pathway bacterial outer membrane biogenesis; LPS lipid A biosynthesis. In terms of biological role, catalyzes the N-acylation of UDP-3-O-acylglucosamine using 3-hydroxyacyl-ACP as the acyl donor. Is involved in the biosynthesis of lipid A, a phosphorylated glycolipid that anchors the lipopolysaccharide to the outer membrane of the cell. The sequence is that of UDP-3-O-acylglucosamine N-acyltransferase from Aeromonas hydrophila subsp. hydrophila (strain ATCC 7966 / DSM 30187 / BCRC 13018 / CCUG 14551 / JCM 1027 / KCTC 2358 / NCIMB 9240 / NCTC 8049).